The following is a 57-amino-acid chain: Large ribosomal subunit protein bL33 (57 aa).

It belongs to the bacterial ribosomal protein bL33 family.

The chain is Large ribosomal subunit protein bL33 from Shewanella halifaxensis (strain HAW-EB4).